The sequence spans 74 residues: Translation initiation factor IF-1, chloroplastic (74 aa).

The 72-residue stretch at 1-72 (MEKQNIIEME…TKGRITYRLR (72 aa)) folds into the S1-like domain.

The protein belongs to the IF-1 family. As to quaternary structure, component of the 30S ribosomal translation pre-initiation complex which assembles on the 30S ribosome in the order IF-2 and IF-3, IF-1 and N-formylmethionyl-tRNA(fMet); mRNA recruitment can occur at any time during PIC assembly.

It is found in the plastid. It localises to the chloroplast. In terms of biological role, one of the essential components for the initiation of protein synthesis. Stabilizes the binding of IF-2 and IF-3 on the 30S subunit to which N-formylmethionyl-tRNA(fMet) subsequently binds. Helps modulate mRNA selection, yielding the 30S pre-initiation complex (PIC). Upon addition of the 50S ribosomal subunit IF-1, IF-2 and IF-3 are released leaving the mature 70S translation initiation complex. In Chlorokybus atmophyticus (Soil alga), this protein is Translation initiation factor IF-1, chloroplastic.